A 56-amino-acid polypeptide reads, in one-letter code: Ovomucoid (56 aa).

Positions 6–56 (VDCSEYPKPACTLEYVPICGSDNKTYGNKCNFCNAVVESNGTLTLSHFGKC) constitute a Kazal-like domain. 3 disulfides stabilise this stretch: C8/C38, C16/C35, and C24/C56. N-linked (GlcNAc...) asparagine glycosylation is present at N45.

The protein resides in the secreted. The protein is Ovomucoid of Cyrtonyx montezumae (Montezuma quail).